We begin with the raw amino-acid sequence, 683 residues long: Zinc finger protein 418 (683 aa).

Positions 48-123 constitute a KRAB domain; sequence VTIEDVTVYF…TPKQGQLRQK (76 aa). The span at 102–120 shows a compositional bias: polar residues; the sequence is QSLSQTEAPQVRTPKQGQL. Disordered regions lie at residues 102–124 and 209–247; these read QSLS…RQKP and DIPN…QHRL. The span at 225–239 shows a compositional bias: basic and acidic residues; the sequence is FHRDKNNSESDEYKK. 14 consecutive C2H2-type zinc fingers follow at residues 287 to 309, 315 to 337, 343 to 365, 371 to 393, 399 to 421, 427 to 449, 455 to 477, 483 to 505, 511 to 533, 539 to 561, 567 to 589, 595 to 617, 623 to 645, and 651 to 673; these read YECH…QRRH, YKCG…CRVH, FECL…QRTH, YECS…QRTH, YECG…QRVH, YHCE…SKIH, YECG…QRTH, YECR…RRIH, YECE…QRVH, YKCE…QRTH, YECA…QKIH, YHCD…QRVH, YTCG…RRIH, and YECD…QLLH.

It belongs to the krueppel C2H2-type zinc-finger protein family.

The protein localises to the nucleus. Functionally, transcriptional repressor. May play a role as regulator of the ubiquitin-proteasome system and autophagy-lysosomal pathway. The polypeptide is Zinc finger protein 418 (Rattus norvegicus (Rat)).